We begin with the raw amino-acid sequence, 88 residues long: UPF0297 protein STER_1937 (88 aa).

Belongs to the UPF0297 family.

The polypeptide is UPF0297 protein STER_1937 (Streptococcus thermophilus (strain ATCC BAA-491 / LMD-9)).